We begin with the raw amino-acid sequence, 691 residues long: Proprotein convertase subtilisin/kexin type 9 (691 aa).

Positions 1–29 are cleaved as a signal peptide; the sequence is MGTVSSRRLWWPLPLLLLLLLLGPAGARA. A propeptide spanning residues 30 to 151 is cleaved from the precursor; the sequence is QEDDDGDYEE…IEEDSSVFAQ (122 aa). At Tyr37 the chain carries Sulfotyrosine. Position 46 is a phosphoserine (Ser46). The 73-residue stretch at 76 to 148 folds into the Inhibitor I9 domain; the sequence is TYVVVLKEET…VDYIEEDSSV (73 aa). In terms of domain architecture, Peptidase S8 spans 154–460; sequence PWNLERITPA…GWQLFCRTVW (307 aa). Active-site charge relay system residues include Asp185 and His225. Disulfide bonds link Cys222/Cys254 and Cys322/Cys357. The Charge relay system role is filled by Ser385. Residues 449 to 691 form a C-terminal domain region; the sequence is GAGWQLFCRT…HLAQASQELQ (243 aa). Intrachain disulfides connect Cys456-Cys526, Cys476-Cys525, and Cys485-Cys508. Residue Asn532 is glycosylated (N-linked (GlcNAc...) asparagine). Cystine bridges form between Cys533/Cys600, Cys551/Cys599, Cys561/Cys587, Cys607/Cys678, Cys625/Cys677, and Cys634/Cys653. Phosphoserine is present on Ser687.

The protein belongs to the peptidase S8 family. Monomer. Can self-associate to form dimers and higher multimers which may have increased LDLR degrading activity. The precursor protein but not the mature protein may form multimers. Interacts with APOB, VLDLR, LRP8/APOER2 and BACE1. The full-length immature form (pro-PCSK9) interacts with SCNN1A, SCNN1B and SCNN1G. The pro-PCSK9 form (via C-terminal domain) interacts with LDLR. Interacts (via the C-terminal domain) with ANXA2 (via repeat Annexin 1); the interaction inhibits the degradation of LDLR. Ca(2+) serves as cofactor. Post-translationally, cleavage by furin and PCSK5 generates a truncated inactive protein that is unable to induce LDLR degradation. Undergoes autocatalytic cleavage in the endoplasmic reticulum to release the propeptide from the N-terminus and the cleavage of the propeptide is strictly required for its maturation and activation. The cleaved propeptide however remains associated with the catalytic domain through non-covalent interactions, preventing potential substrates from accessing its active site. As a result, it is secreted from cells as a propeptide-containing, enzymatically inactive protein. In terms of processing, phosphorylation protects the propeptide against proteolysis.

The protein resides in the cytoplasm. The protein localises to the secreted. Its subcellular location is the endosome. It is found in the lysosome. It localises to the cell surface. The protein resides in the endoplasmic reticulum. The protein localises to the golgi apparatus. With respect to regulation, its proteolytic activity is autoinhibited by the non-covalent binding of the propeptide to the catalytic domain. Inhibited by EGTA. Its function is as follows. Crucial player in the regulation of plasma cholesterol homeostasis. Binds to low-density lipid receptor family members: low density lipoprotein receptor (LDLR), very low density lipoprotein receptor (VLDLR), apolipoprotein E receptor (LRP1/APOER) and apolipoprotein receptor 2 (LRP8/APOER2), and promotes their degradation in intracellular acidic compartments. Acts via a non-proteolytic mechanism to enhance the degradation of the hepatic LDLR through a clathrin LDLRAP1/ARH-mediated pathway. May prevent the recycling of LDLR from endosomes to the cell surface or direct it to lysosomes for degradation. Can induce ubiquitination of LDLR leading to its subsequent degradation. Inhibits intracellular degradation of APOB via the autophagosome/lysosome pathway in a LDLR-independent manner. Involved in the disposal of non-acetylated intermediates of BACE1 in the early secretory pathway. Inhibits epithelial Na(+) channel (ENaC)-mediated Na(+) absorption by reducing ENaC surface expression primarily by increasing its proteasomal degradation. Regulates neuronal apoptosis via modulation of LRP8/APOER2 levels and related anti-apoptotic signaling pathways. The protein is Proprotein convertase subtilisin/kexin type 9 (PCSK9) of Saimiri boliviensis boliviensis (Bolivian squirrel monkey).